We begin with the raw amino-acid sequence, 398 residues long: Cholinephosphotransferase 1 (398 aa).

At Ala-2 the chain carries N-acetylalanine. Topologically, residues 2-62 (AAGAGARPAP…LLQWIPLWMA (61 aa)) are cytoplasmic. A helical membrane pass occupies residues 63 to 83 (PNTITLIGLAINLVTTLVLIF). Position 64 (Asn-64) interacts with CDP-choline. Residues 84-93 (YCPTVTEEAP) lie on the Lumenal side of the membrane. The chain crosses the membrane as a helical span at residues 94 to 118 (YWTYLLCALGLFIYQSLDAIDGKQA). Mg(2+)-binding residues include Asp-111 and Asp-114. A CDP-choline-binding site is contributed by Arg-119. The Cytoplasmic segment spans residues 119–125 (RRTNSCS). A helical membrane pass occupies residues 126 to 150 (PLGELFDHGCDSLSTVFMAIGASIA). Asp-132 serves as a coordination point for Mg(2+). The active-site Proton acceptor is the His-133. Mg(2+) is bound at residue Asp-136. Topologically, residues 151 to 160 (VRLGTHPDWL) are lumenal. Residues 161-179 (FFCSFVGMFMFYCAHWQTY) traverse the membrane as a helical segment. Over 180-190 (VSGVLRFGRVD) the chain is Cytoplasmic. Residues 191-207 (VTEIQVALVIVFMLSTF) form a helical membrane-spanning segment. The Lumenal portion of the chain corresponds to 208 to 222 (GGATMWDYTIPILEI). Residues 223-248 (KLKIVPVLGVVGGLIFSCSNYFHVIL) traverse the membrane as a helical segment. Topologically, residues 249 to 265 (HGGVGKNGSTIAGTSVL) are cytoplasmic. The chain crosses the membrane as a helical span at residues 266 to 281 (SPGLHIGLIIILAIMI). Residues 282-293 (YKKSATNMFEKH) lie on the Lumenal side of the membrane. Residues 294-316 (PCLYTLMFGCVFAKVAQKLVIAH) traverse the membrane as a helical segment. At 317–329 (MTKSELYLQDTVF) the chain is on the cytoplasmic side. Residues 330–339 (IGPGLLFLDQ) form a helical membrane-spanning segment. Residues 340-346 (YFNNFID) are Lumenal-facing. A helical membrane pass occupies residues 347 to 376 (EYVVLWIAMVISSFDMMIYFTSLCLQISRH). Residues 377-398 (LHLNIFKTSCQQAPEQVYKHID) lie on the Cytoplasmic side of the membrane.

The protein belongs to the CDP-alcohol phosphatidyltransferase class-I family. Mg(2+) is required as a cofactor. The cofactor is Mn(2+). In terms of tissue distribution, expressed in brain, heart, lung, liver, spleen, intestine and muscle. Down-regulated in kidney of type 2 diabetic KK/Ta mice.

It localises to the golgi apparatus membrane. It catalyses the reaction CDP-choline + a 1,2-diacyl-sn-glycerol = a 1,2-diacyl-sn-glycero-3-phosphocholine + CMP + H(+). It carries out the reaction 1-octadecanoyl-2-(5Z,8Z,11Z,14Z-eicosatetraenoyl)-sn-glycerol + CDP-choline = 1-octadecanoyl-2-(5Z,8Z,11Z,14Z-eicosatetraenoyl)-sn-glycero-3-phosphocholine + CMP + H(+). The enzyme catalyses 1-hexadecanoyl-2-(9Z-octadecenoyl)-sn-glycerol + CDP-choline = 1-hexadecanoyl-2-(9Z-octadecenoyl)-sn-glycero-3-phosphocholine + CMP + H(+). The catalysed reaction is 1-hexadecanoyl-2-(4Z,7Z,10Z,13Z,16Z,19Z-docosahexaenoyl)-sn-glycerol + CDP-choline = 1-hexadecanoyl-2-(4Z,7Z,10Z,13Z,16Z,19Z-docosahexaenoyl)-sn-glycero-3-phosphocholine + CMP + H(+). It catalyses the reaction 1,2-dioctanoyl-sn-glycerol + CDP-choline = 1,2-dioctanoyl-sn-glycero-3-phosphocholine + CMP + H(+). It functions in the pathway phospholipid metabolism; phosphatidylcholine biosynthesis; phosphatidylcholine from phosphocholine: step 2/2. Its function is as follows. Catalyzes the final step of de novo phosphatidylcholine (PC) synthesis, i.e. the transfer of choline phosphate from CDP-choline to the free hydroxyl of a diacylglycerol (DAG), producing a PC. It thereby plays a central role in the formation and maintenance of vesicular membranes. The protein is Cholinephosphotransferase 1 of Mus musculus (Mouse).